A 327-amino-acid chain; its full sequence is Complex I intermediate-associated protein 30, mitochondrial (327 aa).

A mitochondrion-targeting transit peptide spans 1 to 24; sequence MALVHKLLRGTYFLRKFXKPTSAL. Positions 42 to 63 are disordered; that stretch reads PVASPGKASSQRKTEGDLQGDH. Basic and acidic residues predominate over residues 53–63; that stretch reads RKTEGDLQGDH. At Ser-318 the chain carries Phosphoserine.

The protein belongs to the CIA30 family. Part of the mitochondrial complex I assembly/MCIA complex that comprises at least the core subunits TMEM126B, NDUFAF1, ECSIT and ACAD9 and complement subunits such as COA1 and TMEM186. Interacts with ECSIT. Interacts with ACAD9. At early stages of complex I assembly, it is found in intermediate subcomplexes that contain different subunits including NDUFB6, NDUFA6, NDUFA9, NDUFS3, NDUFS7, ND1, ND2 and ND3. Interacts with TMEM70 and TMEM242.

The protein resides in the mitochondrion. It localises to the mitochondrion matrix. In terms of biological role, as part of the MCIA complex, involved in the assembly of the mitochondrial complex I. The sequence is that of Complex I intermediate-associated protein 30, mitochondrial from Pan troglodytes (Chimpanzee).